The primary structure comprises 131 residues: Hydrophilin PGA14 (131 aa).

The N-terminal stretch at 1 to 18 (MKFTTVATVFAISSLAAA) is a signal peptide. Composition is skewed to basic and acidic residues over residues 42–59 (YGRF…ETGT) and 79–96 (KESD…RDSK). The interval 42 to 110 (YGRFDKTSRS…NSTTSSGNNG (69 aa)) is disordered. N97 and N101 each carry an N-linked (GlcNAc...) asparagine glycan. A compositionally biased stretch (low complexity) spans 97-110 (NASSNSTTSSGNNG). S105 is lipidated: GPI-anchor amidated serine. A propeptide spans 106–131 (SGNNGVATGVSLGLAGVLAVGAALVI) (removed in mature form).

It belongs to the PGA14 family. Post-translationally, the GPI-anchor is attached to the protein in the endoplasmic reticulum and serves to target the protein to the cell surface. There, the glucosamine-inositol phospholipid moiety is cleaved off and the GPI-modified mannoprotein is covalently attached via its lipidless GPI glycan remnant to the 1,6-beta-glucan of the outer cell wall layer.

It is found in the secreted. It localises to the cell wall. The protein localises to the membrane. Hydrophilin which is essential to overcome the simple stress of the desiccation-rehydration process. This is Hydrophilin PGA14 (PGA14) from Candida albicans (strain SC5314 / ATCC MYA-2876) (Yeast).